Consider the following 266-residue polypeptide: Type III pantothenate kinase (266 aa).

6 to 13 lines the ATP pocket; sequence DAGNTNIV. Substrate is bound by residues Tyr100 and 107-110; that span reads GADR. The active-site Proton acceptor is Asp109. Asp129 lines the K(+) pocket. Thr132 lines the ATP pocket. A substrate-binding site is contributed by Thr184.

This sequence belongs to the type III pantothenate kinase family. In terms of assembly, homodimer. NH4(+) is required as a cofactor. Requires K(+) as cofactor.

Its subcellular location is the cytoplasm. The catalysed reaction is (R)-pantothenate + ATP = (R)-4'-phosphopantothenate + ADP + H(+). It participates in cofactor biosynthesis; coenzyme A biosynthesis; CoA from (R)-pantothenate: step 1/5. Its function is as follows. Catalyzes the phosphorylation of pantothenate (Pan), the first step in CoA biosynthesis. This is Type III pantothenate kinase from Clostridium beijerinckii (strain ATCC 51743 / NCIMB 8052) (Clostridium acetobutylicum).